A 645-amino-acid chain; its full sequence is Cell pattern formation-associated protein stuA (645 aa).

Residues 1–52 (MNQMQPYADVHQPHMSTAAHAPASGPPAGLSHYSYPHQPSMMQPQQQQHQYG) form a disordered region. Over residues 18-52 (AAHAPASGPPAGLSHYSYPHQPSMMQPQQQQHQYG) the composition is skewed to low complexity. One can recognise an HTH APSES-type domain in the interval 124–230 (RVTATLWEDE…HDIGALLYHP (107 aa)). Residues 158–179 (GTKLLNVAGMTRGRRDGILKSE) constitute a DNA-binding region (H-T-H motif). Residues 246–645 (VDRNRRPDSM…HTLAAQRARR (400 aa)) are disordered. Polar residues-rich tracts occupy residues 254-271 (SMQT…SQAP) and 279-288 (MTNSVGSAMS). A compositionally biased stretch (low complexity) spans 317 to 330 (SASSMMGMGNQGSS). Residues 336–365 (ANVQQHPQGNQPLSIDTGLSNARSVPTTPA) are compositionally biased toward polar residues. A compositionally biased stretch (low complexity) spans 469–481 (PYNGNRGPYGYNP). 2 stretches are compositionally biased toward polar residues: residues 502-542 (SPHQ…NLYN) and 569-584 (YASQ…NSSG). Residues 585–613 (KRGRDEEDAETYRPDSVQGDDMGGLKRRK) are nuclear localization domain. The span at 586–597 (RGRDEEDAETYR) shows a compositional bias: basic and acidic residues.

Belongs to the EFG1/PHD1/stuA family.

The protein resides in the nucleus. Its function is as follows. Transcription factor that regulates asexual reproduction. Binds the StuA-response elements (StRE) with the consensus sequence 5'-(A/T)CGCG(T/A)N(A/C)-3' at the promoters of target genes. Regulates the expression of several effector genes (AvrLm1, AvrLm6 and AvrLm4-7) during infection stage. In Leptosphaeria maculans (strain JN3 / isolate v23.1.3 / race Av1-4-5-6-7-8) (Blackleg fungus), this protein is Cell pattern formation-associated protein stuA.